Reading from the N-terminus, the 501-residue chain is UPF0616 protein C1687.04 (501 aa).

It belongs to the UPF0616 family.

It localises to the cytoplasm. The protein resides in the nucleus. The chain is UPF0616 protein C1687.04 from Schizosaccharomyces pombe (strain 972 / ATCC 24843) (Fission yeast).